Consider the following 225-residue polypeptide: Ribonuclease 3 (225 aa).

Residues 7-129 (IPRLCRTLGY…IIGAIYLDSE (123 aa)) enclose the RNase III domain. Glutamate 42 provides a ligand contact to Mg(2+). Residue aspartate 46 is part of the active site. Mg(2+) contacts are provided by aspartate 115 and glutamate 118. The active site involves glutamate 118. The DRBM domain maps to 155 to 225 (DPKTLLQEHL…AAQVLELMKK (71 aa)).

The protein belongs to the ribonuclease III family. As to quaternary structure, homodimer. Mg(2+) serves as cofactor.

Its subcellular location is the cytoplasm. The enzyme catalyses Endonucleolytic cleavage to 5'-phosphomonoester.. In terms of biological role, digests double-stranded RNA. Involved in the processing of primary rRNA transcript to yield the immediate precursors to the large and small rRNAs (23S and 16S). Processes some mRNAs, and tRNAs when they are encoded in the rRNA operon. Processes pre-crRNA and tracrRNA of type II CRISPR loci if present in the organism. This is Ribonuclease 3 from Shewanella halifaxensis (strain HAW-EB4).